A 419-amino-acid chain; its full sequence is 4-hydroxyphenylpyruvate dioxygenase (419 aa).

2 VOC domains span residues Gly-37–Arg-185 and Arg-216–Arg-376. The Fe cation site is built by His-219, His-302, and Glu-387.

It belongs to the 4HPPD family. It depends on Fe cation as a cofactor.

The catalysed reaction is 3-(4-hydroxyphenyl)pyruvate + O2 = homogentisate + CO2. It functions in the pathway amino-acid degradation; L-phenylalanine degradation; acetoacetate and fumarate from L-phenylalanine: step 3/6. This Pyricularia oryzae (strain 70-15 / ATCC MYA-4617 / FGSC 8958) (Rice blast fungus) protein is 4-hydroxyphenylpyruvate dioxygenase (HPD4).